We begin with the raw amino-acid sequence, 202 residues long: NADH-quinone oxidoreductase subunit C (202 aa).

The protein belongs to the complex I 30 kDa subunit family. In terms of assembly, NDH-1 is composed of 14 different subunits. Subunits NuoB, C, D, E, F, and G constitute the peripheral sector of the complex.

It localises to the cell inner membrane. The catalysed reaction is a quinone + NADH + 5 H(+)(in) = a quinol + NAD(+) + 4 H(+)(out). Its function is as follows. NDH-1 shuttles electrons from NADH, via FMN and iron-sulfur (Fe-S) centers, to quinones in the respiratory chain. The immediate electron acceptor for the enzyme in this species is believed to be ubiquinone. Couples the redox reaction to proton translocation (for every two electrons transferred, four hydrogen ions are translocated across the cytoplasmic membrane), and thus conserves the redox energy in a proton gradient. The sequence is that of NADH-quinone oxidoreductase subunit C from Hyphomonas neptunium (strain ATCC 15444).